Consider the following 490-residue polypeptide: Glutamate--tRNA ligase (490 aa).

Positions 15-25 match the 'HIGH' region motif; that stretch reads PSPTGYLHVGG. Residues 259–263 carry the 'KMSKS' region motif; that stretch reads KLSKR. Lys262 provides a ligand contact to ATP.

It belongs to the class-I aminoacyl-tRNA synthetase family. Glutamate--tRNA ligase type 1 subfamily. In terms of assembly, monomer.

It localises to the cytoplasm. The enzyme catalyses tRNA(Glu) + L-glutamate + ATP = L-glutamyl-tRNA(Glu) + AMP + diphosphate. Catalyzes the attachment of glutamate to tRNA(Glu) in a two-step reaction: glutamate is first activated by ATP to form Glu-AMP and then transferred to the acceptor end of tRNA(Glu). In Bdellovibrio bacteriovorus (strain ATCC 15356 / DSM 50701 / NCIMB 9529 / HD100), this protein is Glutamate--tRNA ligase.